A 322-amino-acid chain; its full sequence is Probable transcription factor KAN3 (322 aa).

Residues 1–35 form a disordered region; that stretch reads MELFPSQPDLYLKISRRREEEQEKESQELQEQEVE. The segment covering 17 to 35 has biased composition (basic and acidic residues); it reads RREEEQEKESQELQEQEVE. The 61-residue stretch at 161–221 folds into the HTH myb-type domain; the sequence is GVRAPRMRWT…HLQMYRTIKS (61 aa). Positions 192-217 form a DNA-binding region, H-T-H motif; it reads PKSVLELMDVQDLTLAHVKSHLQMYR. Disordered regions lie at residues 222 to 244 and 267 to 322; these read TEKP…NSER and KASS…NLSP. Polar residues-rich tracts occupy residues 224–241 and 299–322; these read KPTT…SQVN and LTGT…NLSP.

As to expression, expressed in developing phloem.

Its subcellular location is the nucleus. Functionally, probable transcription factor that regulates lateral organ polarity. Plays a role in lateral root formation and development. This is Probable transcription factor KAN3 (KAN3) from Arabidopsis thaliana (Mouse-ear cress).